The following is a 580-amino-acid chain: NADH-quinone oxidoreductase subunit C/D (580 aa).

The tract at residues 1 to 171 is NADH dehydrogenase I subunit C; the sequence is MSLDQAIPEA…PPFVLTDRLF (171 aa). Residues 195–580 form an NADH dehydrogenase I subunit D region; the sequence is ELMVLNFGPH…IDFVMSDVDR (386 aa).

The protein in the N-terminal section; belongs to the complex I 30 kDa subunit family. It in the C-terminal section; belongs to the complex I 49 kDa subunit family. In terms of assembly, NDH-1 is composed of 13 different subunits. Subunits NuoB, CD, E, F, and G constitute the peripheral sector of the complex.

It is found in the cell inner membrane. The catalysed reaction is a quinone + NADH + 5 H(+)(in) = a quinol + NAD(+) + 4 H(+)(out). NDH-1 shuttles electrons from NADH, via FMN and iron-sulfur (Fe-S) centers, to quinones in the respiratory chain. The immediate electron acceptor for the enzyme in this species is believed to be ubiquinone. Couples the redox reaction to proton translocation (for every two electrons transferred, four hydrogen ions are translocated across the cytoplasmic membrane), and thus conserves the redox energy in a proton gradient. The protein is NADH-quinone oxidoreductase subunit C/D of Cereibacter sphaeroides (strain ATCC 17029 / ATH 2.4.9) (Rhodobacter sphaeroides).